The sequence spans 245 residues: 1-(5-phosphoribosyl)-5-[(5-phosphoribosylamino)methylideneamino] imidazole-4-carboxamide isomerase (245 aa).

Residue D8 is the Proton acceptor of the active site. Catalysis depends on D129, which acts as the Proton donor.

This sequence belongs to the HisA/HisF family.

The protein localises to the cytoplasm. The catalysed reaction is 1-(5-phospho-beta-D-ribosyl)-5-[(5-phospho-beta-D-ribosylamino)methylideneamino]imidazole-4-carboxamide = 5-[(5-phospho-1-deoxy-D-ribulos-1-ylimino)methylamino]-1-(5-phospho-beta-D-ribosyl)imidazole-4-carboxamide. Its pathway is amino-acid biosynthesis; L-histidine biosynthesis; L-histidine from 5-phospho-alpha-D-ribose 1-diphosphate: step 4/9. In Trichlorobacter lovleyi (strain ATCC BAA-1151 / DSM 17278 / SZ) (Geobacter lovleyi), this protein is 1-(5-phosphoribosyl)-5-[(5-phosphoribosylamino)methylideneamino] imidazole-4-carboxamide isomerase.